We begin with the raw amino-acid sequence, 351 residues long: MSEGEMAIIKPEMMKSYIWLETADGSIQQVEQEVAMFCPMICQEVIQKGVGSSKNYAISLPQRVNPAMLSLIFDYCRFHQVPGRSNKERKVYDEKFIRMDTKRLCELTSAADSLQLKPLVDLTSRALARIIEGKTPEEIREIFHLPDDLTEEEKLEPLKNTMDDPRIRLLNRLYAKKRKELKEREKLKSVEVEEHVDERSVDDLLSFINGRDPKVVKTSKSKKKNKKRKEQKNGSSNGTCEALEKDLHNLDSKSQSAEIVDNTASCLGDVSNLPSMEDDIFTPKTEFEDGYIDDEIDPALKELLDREVEDFARRLNSSWVLSIGQERQPVNFSINGNGTSRRLTGPAAGHK.

The segment at 108 to 167 (TSAADSLQLKPLVDLTSRALARIIEGKTPEEIREIFHLPDDLTEEEKLEPLKNTMDDPRI) is interaction with the F-box domain of F-box proteins. 2 disordered regions span residues 216-240 (VKTS…NGTC) and 330-351 (VNFS…AGHK). Residues 217–230 (KTSKSKKKNKKRKE) show a composition bias toward basic residues. The segment covering 330–342 (VNFSINGNGTSRR) has biased composition (polar residues).

The protein belongs to the SKP1 family. In terms of assembly, part of a SCF (SKP1-cullin-F-box) protein ligase complex. As to expression, expressed in young seedlings, roots, leaves, floral stems, inflorescences, and siliques.

It is found in the nucleus. Its pathway is protein modification; protein ubiquitination. Involved in ubiquitination and subsequent proteasomal degradation of target proteins. Together with CUL1, RBX1 and a F-box protein, it forms a SCF E3 ubiquitin ligase complex. The functional specificity of this complex depends on the type of F-box protein. In the SCF complex, it serves as an adapter that links the F-box protein to CUL1. The polypeptide is SKP1-like protein 21 (ASK21) (Arabidopsis thaliana (Mouse-ear cress)).